Reading from the N-terminus, the 173-residue chain is Succinate dehydrogenase assembly factor 3, mitochondrial (173 aa).

Residues 1 to 59 constitute a mitochondrion transit peptide; it reads MFRPSTSLALRSTLRQLASASNQPIPPGSEINAVKRTVATILPPIRLYRRIIRAHRRLD. Residues 149–173 form a disordered region; that stretch reads FPPEKQRELAEKAAADAGLSVKKDE. Over residues 152–162 the composition is skewed to basic and acidic residues; the sequence is EKQRELAEKAA.

This sequence belongs to the complex I LYR family. SDHAF3 subfamily. In terms of assembly, interacts with the iron-sulfur protein subunit within the SDH catalytic dimer.

The protein localises to the mitochondrion matrix. Its function is as follows. Plays an essential role in the assembly of succinate dehydrogenase (SDH), an enzyme complex (also referred to as respiratory complex II) that is a component of both the tricarboxylic acid (TCA) cycle and the mitochondrial electron transport chain, and which couples the oxidation of succinate to fumarate with the reduction of ubiquinone (coenzyme Q) to ubiquinol. Promotes maturation of the iron-sulfur protein subunit of the SDH catalytic dimer, protecting it from the deleterious effects of oxidants. May act together with SDHAF1. This chain is Succinate dehydrogenase assembly factor 3, mitochondrial, found in Mycosarcoma maydis (Corn smut fungus).